A 59-amino-acid chain; its full sequence is Protein translocase subunit SecE (59 aa).

The helical transmembrane segment at 30–50 (ITVITTVIFFAIFFALIDSGI) threads the bilayer.

This sequence belongs to the SecE/SEC61-gamma family. In terms of assembly, component of the Sec protein translocase complex. Heterotrimer consisting of SecY, SecE and SecG subunits. The heterotrimers can form oligomers, although 1 heterotrimer is thought to be able to translocate proteins. Interacts with the ribosome. Interacts with SecDF, and other proteins may be involved. Interacts with SecA.

Its subcellular location is the cell membrane. In terms of biological role, essential subunit of the Sec protein translocation channel SecYEG. Clamps together the 2 halves of SecY. May contact the channel plug during translocation. The chain is Protein translocase subunit SecE from Bacillus licheniformis.